Reading from the N-terminus, the 449-residue chain is Glucose-6-phosphate isomerase (449 aa).

Glu-291 functions as the Proton donor in the catalytic mechanism. Residues His-312 and Lys-426 contribute to the active site.

This sequence belongs to the GPI family.

It localises to the cytoplasm. It catalyses the reaction alpha-D-glucose 6-phosphate = beta-D-fructose 6-phosphate. The protein operates within carbohydrate biosynthesis; gluconeogenesis. Its pathway is carbohydrate degradation; glycolysis; D-glyceraldehyde 3-phosphate and glycerone phosphate from D-glucose: step 2/4. Its function is as follows. Catalyzes the reversible isomerization of glucose-6-phosphate to fructose-6-phosphate. This chain is Glucose-6-phosphate isomerase, found in Streptococcus pyogenes serotype M28 (strain MGAS6180).